We begin with the raw amino-acid sequence, 368 residues long: Flagellar P-ring protein (368 aa).

The signal sequence occupies residues 1-24 (MDKPMKRIFVVLVILLVLPQLALA).

Belongs to the FlgI family. As to quaternary structure, the basal body constitutes a major portion of the flagellar organelle and consists of four rings (L,P,S, and M) mounted on a central rod.

The protein localises to the periplasm. The protein resides in the bacterial flagellum basal body. Assembles around the rod to form the L-ring and probably protects the motor/basal body from shearing forces during rotation. This chain is Flagellar P-ring protein, found in Geobacter sulfurreducens (strain ATCC 51573 / DSM 12127 / PCA).